We begin with the raw amino-acid sequence, 359 residues long: MSFWKVATLWQMPLRPSILVQVRTATKRAAGSRTSMKDSAGRRLGPKKTEGQRVEVGQIIMRQRGTRFYPGENVGIGKDHTLFALEPGWVRYYLDPFHTGRKFVGVALYQDMRLPIEHFAPRVRRFGRQLLSGKEAETEEQALPRSVFLAKEKILERAQQRADAREQRRAEFGHILREELGLALDQDAEQLATEYLLRVQTNLKSGFNSADARFNAMYHMEVRMRNTPEKVGQMDLLKKTVASVDAATSFSNKFELGRHISEGERVAWREALHKDLAGLVIRTAEEKQRVVERLKEASKYLSLSEEIHLRRKFLKPVKPETEAVAEAAGKGTVTIKRFNYGTGKVDTIIREKKAFLAKL.

The N-terminal 24 residues, 1 to 24 (MSFWKVATLWQMPLRPSILVQVRT), are a transit peptide targeting the mitochondrion. Residues 29–48 (AAGSRTSMKDSAGRRLGPKK) form a disordered region. Over residues 35-48 (SMKDSAGRRLGPKK) the composition is skewed to basic and acidic residues.

The protein belongs to the bacterial ribosomal protein bL27 family.

It localises to the mitochondrion. Component of the large subunit of mitochondrial ribosome. This is Large ribosomal subunit protein bL27m (MRPL2) from Eremothecium gossypii (strain ATCC 10895 / CBS 109.51 / FGSC 9923 / NRRL Y-1056) (Yeast).